Reading from the N-terminus, the 276-residue chain is Large ribosomal subunit protein uL2 (276 aa).

The disordered stretch occupies residues 223–276; it reads GVAMNPVDHPHGGGEGRGKGHHPTSPWGLPTKGYKTRRGKRPSDKFIVRRRNEV. 2 stretches are compositionally biased toward basic and acidic residues: residues 230–240 and 263–276; these read DHPHGGGEGRG and RPSDKFIVRRRNEV.

This sequence belongs to the universal ribosomal protein uL2 family. Part of the 50S ribosomal subunit. Forms a bridge to the 30S subunit in the 70S ribosome.

Its function is as follows. One of the primary rRNA binding proteins. Required for association of the 30S and 50S subunits to form the 70S ribosome, for tRNA binding and peptide bond formation. It has been suggested to have peptidyltransferase activity; this is somewhat controversial. Makes several contacts with the 16S rRNA in the 70S ribosome. The chain is Large ribosomal subunit protein uL2 from Thermotoga maritima (strain ATCC 43589 / DSM 3109 / JCM 10099 / NBRC 100826 / MSB8).